We begin with the raw amino-acid sequence, 204 residues long: Transcription initiation factor TFIID subunit 11b (204 aa).

The disordered stretch occupies residues P38 to D60. A compositionally biased stretch (acidic residues) spans A42–E58. The region spanning F106–P195 is the Histone-fold domain.

This sequence belongs to the TAF11 family. In terms of assembly, component of the TFIID complex. TFIID is composed of TATA binding protein (TBP) and a number of TBP-associated factors (TAFs) whose MWs range from 14-217 kDa. In terms of tissue distribution, expressed in roots, leaves and inflorescences.

Its subcellular location is the nucleus. In terms of biological role, TAFs are components of the transcription factor IID (TFIID) complex that is essential for mediating regulation of RNA polymerase transcription. This is Transcription initiation factor TFIID subunit 11b (TAF11B) from Arabidopsis thaliana (Mouse-ear cress).